Consider the following 217-residue polypeptide: ATP-dependent Clp protease proteolytic subunit (217 aa).

Ser121 serves as the catalytic Nucleophile. Residue His146 is part of the active site.

It belongs to the peptidase S14 family. As to quaternary structure, fourteen ClpP subunits assemble into 2 heptameric rings which stack back to back to give a disk-like structure with a central cavity, resembling the structure of eukaryotic proteasomes.

The protein localises to the cytoplasm. The catalysed reaction is Hydrolysis of proteins to small peptides in the presence of ATP and magnesium. alpha-casein is the usual test substrate. In the absence of ATP, only oligopeptides shorter than five residues are hydrolyzed (such as succinyl-Leu-Tyr-|-NHMec, and Leu-Tyr-Leu-|-Tyr-Trp, in which cleavage of the -Tyr-|-Leu- and -Tyr-|-Trp bonds also occurs).. Functionally, cleaves peptides in various proteins in a process that requires ATP hydrolysis. Has a chymotrypsin-like activity. Plays a major role in the degradation of misfolded proteins. This Burkholderia vietnamiensis (strain G4 / LMG 22486) (Burkholderia cepacia (strain R1808)) protein is ATP-dependent Clp protease proteolytic subunit.